Here is a 113-residue protein sequence, read N- to C-terminus: Nucleoid-associated protein CLJ_B0037 (113 aa).

The span at 93 to 102 (EEDTSSEVKR) shows a compositional bias: basic and acidic residues. The tract at residues 93 to 113 (EEDTSSEVKRLTGGMNLPGMF) is disordered.

The protein belongs to the YbaB/EbfC family. As to quaternary structure, homodimer.

The protein resides in the cytoplasm. The protein localises to the nucleoid. In terms of biological role, binds to DNA and alters its conformation. May be involved in regulation of gene expression, nucleoid organization and DNA protection. The protein is Nucleoid-associated protein CLJ_B0037 of Clostridium botulinum (strain 657 / Type Ba4).